The following is a 229-amino-acid chain: Transmembrane emp24 domain-containing protein 5 (229 aa).

An N-terminal signal peptide occupies residues 1-27 (MGDKIWLPFPVLLLAALPPVLLPGAAG). The Lumenal portion of the chain corresponds to 28-196 (FTPSLDSDFT…IQESNFDRVN (169 aa)). Positions 45-126 (KECFYQPMPL…EKVIFFELIL (82 aa)) constitute a GOLD domain. A helical membrane pass occupies residues 197-217 (FWSMVNLVVMVVVSAIQVYML). The Cytoplasmic portion of the chain corresponds to 218–229 (KSLFEDKRKSRT).

This sequence belongs to the EMP24/GP25L family. Interacts with TMED9 and TMED10.

The protein resides in the endoplasmic reticulum membrane. Its subcellular location is the golgi apparatus. The protein localises to the cis-Golgi network membrane. It is found in the endoplasmic reticulum-Golgi intermediate compartment membrane. Its function is as follows. Potential role in vesicular protein trafficking, mainly in the early secretory pathway. Required for the maintenance of the Golgi apparatus; involved in protein exchange between Golgi stacks during assembly. Probably not required for COPI-vesicle-mediated retrograde transport. This Homo sapiens (Human) protein is Transmembrane emp24 domain-containing protein 5 (TMED5).